The following is a 207-amino-acid chain: NADH-quinone oxidoreductase subunit C (207 aa).

It belongs to the complex I 30 kDa subunit family. In terms of assembly, NDH-1 is composed of 14 different subunits. Subunits NuoB, C, D, E, F, and G constitute the peripheral sector of the complex.

The protein localises to the cell inner membrane. The enzyme catalyses a quinone + NADH + 5 H(+)(in) = a quinol + NAD(+) + 4 H(+)(out). Its function is as follows. NDH-1 shuttles electrons from NADH, via FMN and iron-sulfur (Fe-S) centers, to quinones in the respiratory chain. The immediate electron acceptor for the enzyme in this species is believed to be ubiquinone. Couples the redox reaction to proton translocation (for every two electrons transferred, four hydrogen ions are translocated across the cytoplasmic membrane), and thus conserves the redox energy in a proton gradient. The chain is NADH-quinone oxidoreductase subunit C from Thermus thermophilus (strain ATCC BAA-163 / DSM 7039 / HB27).